The primary structure comprises 521 residues: Glutamyl-tRNA(Gln) amidotransferase subunit A (521 aa).

Residues K79 and S187 each act as charge relay system in the active site. The active-site Acyl-ester intermediate is S211.

This sequence belongs to the amidase family. GatA subfamily. Heterotrimer of A, B and C subunits.

The enzyme catalyses L-glutamyl-tRNA(Gln) + L-glutamine + ATP + H2O = L-glutaminyl-tRNA(Gln) + L-glutamate + ADP + phosphate + H(+). Allows the formation of correctly charged Gln-tRNA(Gln) through the transamidation of misacylated Glu-tRNA(Gln) in organisms which lack glutaminyl-tRNA synthetase. The reaction takes place in the presence of glutamine and ATP through an activated gamma-phospho-Glu-tRNA(Gln). This is Glutamyl-tRNA(Gln) amidotransferase subunit A from Mesorhizobium japonicum (strain LMG 29417 / CECT 9101 / MAFF 303099) (Mesorhizobium loti (strain MAFF 303099)).